The chain runs to 141 residues: MAARLCCQLDSARDVLLLRPFGPQSSGPPFPRPAAGSAASSTSSPSPSDESDLPLGRLPACFASASGPCCLVFTCADLRTMDSTVNFVSWHAKRQLGMPSKDLWTPYIKDQLLTKWEEGSIDPRLSIFVLGGCRHKCMRLL.

The disordered stretch occupies residues Gln-24–Asp-52. Residues Pro-33 to Ser-48 are compositionally biased toward low complexity. The mitochondrial targeting sequence stretch occupies residues Pro-68–Leu-113.

It belongs to the orthohepadnavirus protein X family. In terms of assembly, may form homodimer. May interact with host CEBPA, CFLAR, CREB1, DDB1, E4F1, HBXIP, HSPD1/HSP60, NFKBIA, POLR2E and SMAD4. Interacts with host SMC5-SMC6 complex and induces its degradation. Interacts with host TRPC4AP; leading to prevent ubiquitination of TRPC4AP. Interacts with host PLSCR1; this interaction promotes ubiquitination and degradation of HBx and impairs HBx-mediated cell proliferation. In terms of processing, a fraction may be phosphorylated in insect cells and HepG2 cells, a human hepatoblastoma cell line. Phosphorylated in vitro by host protein kinase C or mitogen-activated protein kinase. N-acetylated in insect cells.

It is found in the host cytoplasm. The protein localises to the host nucleus. The protein resides in the host mitochondrion. In terms of biological role, multifunctional protein that plays a role in silencing host antiviral defenses and promoting viral transcription. Does not seem to be essential for HBV infection. May be directly involved in development of cirrhosis and liver cancer (hepatocellular carcinoma). Most of cytosolic activities involve modulation of cytosolic calcium. The effect on apoptosis is controversial depending on the cell types in which the studies have been conducted. May induce apoptosis by localizing in mitochondria and causing loss of mitochondrial membrane potential. May also modulate apoptosis by binding host CFLAR, a key regulator of the death-inducing signaling complex (DISC). Promotes viral transcription by using the host E3 ubiquitin ligase DDB1 to target the SMC5-SMC6 complex to proteasomal degradation. This host complex would otherwise bind to viral episomal DNA, and prevents its transcription. Moderately stimulates transcription of many different viral and cellular transcription elements. Promoters and enhancers stimulated by HBx contain DNA binding sites for NF-kappa-B, AP-1, AP-2, c-EBP, ATF/CREB, or the calcium-activated factor NF-AT. This is Protein X from Marmota monax (Woodchuck).